We begin with the raw amino-acid sequence, 128 residues long: Large ribosomal subunit protein bL19 (128 aa).

Belongs to the bacterial ribosomal protein bL19 family.

Functionally, this protein is located at the 30S-50S ribosomal subunit interface and may play a role in the structure and function of the aminoacyl-tRNA binding site. This is Large ribosomal subunit protein bL19 from Aromatoleum aromaticum (strain DSM 19018 / LMG 30748 / EbN1) (Azoarcus sp. (strain EbN1)).